Here is a 276-residue protein sequence, read N- to C-terminus: Putative hydro-lyase Xaut_1503 (276 aa).

This sequence belongs to the D-glutamate cyclase family.

The chain is Putative hydro-lyase Xaut_1503 from Xanthobacter autotrophicus (strain ATCC BAA-1158 / Py2).